A 227-amino-acid polypeptide reads, in one-letter code: Albumin-2 (227 aa).

Hemopexin repeat units lie at residues 3 to 46 (PGYI…GPTP), 61 to 111 (SYGI…FPFF), 117 to 165 (ESGI…YPCF), and 171 to 221 (ESGA…WPSL). Residues asparagine 7 and aspartate 65 each coordinate Ca(2+). Position 118 (serine 118) interacts with spermine. Positions 121 and 175 each coordinate Ca(2+).

As to quaternary structure, monomer and homodimer. Dimers are prevalent in solution.

The protein localises to the cytoplasm. Its subcellular location is the cytosol. May play a role in response to oxidative stress and polyamine biosynthesis. The monomeric form binds one hemin per monomer. In the dimeric form, about half of the dimers bind one molecule of spermine each under physiological conditions. Ligand binding is mutually exclusive as binding of hemin leads to dissociation of the dimer. This Lathyrus sativus (White vetchling) protein is Albumin-2.